Here is a 502-residue protein sequence, read N- to C-terminus: MEIDESKRASSDSLTIYVGELSPKTLDSDLFRVFSNVGKVLSVKLIKRAEPVSSFAFVTFENEEDAERAIREYKHYELHNRQIRVMKKDERPPETGNIFVKNLPEDFTGKDLDDAFSMFGEIVSCKVATTSHGKSKGYGFVQFKEKKAAKKVIKNFSSLDGLLLGGNRIVVELYNPEIKKGESKKTSATFTNCFIKNFPFDASEAELLELLERYGKVTSLFFPVKDNGKPKGFAFANFENHESALNAIKNLHGTFPFGAGRDGTGEAFYIQKGQRKEERAEELRKMFEQMSMQGQSYKKNLYITNIPEGFGCEELGSIFKEFGNITSISVGVDGANSQKQYAYICYSTPEEASIAVERGNEIYLDGNRLQVAYFKNKLERMKEKEFGGGLGYKPGVPYMYNQGVSFASRGFKRERNRGGAAKPYGNELEKLHSLVLAAAPSFKSQWKDFGVGNEVEFANKVIRAFRSRSEEEIKDMIDLNFVLTKNIASAIEDDNSNDQVLL.

4 RRM domains span residues 14–90 (LTIY…KKDE), 96–176 (GNIF…LYNP), 191–275 (TNCF…KGQR), and 299–376 (KNLY…YFKN).

The protein belongs to the polyadenylate-binding protein type-1 family.

Its subcellular location is the cytoplasm. The protein localises to the nucleus. Functionally, binds the poly(A) tail of mRNA. Appears to be an important mediator of the multiple roles of the poly(A) tail in mRNA biogenesis, stability and translation. The chain is Polyadenylate-binding protein, cytoplasmic and nuclear (PAB1) from Encephalitozoon cuniculi (strain GB-M1) (Microsporidian parasite).